The following is a 353-amino-acid chain: RNA 3'-terminal phosphate cyclase (353 aa).

Residues Gln-100 and 289-292 (HMSD) contribute to the ATP site. His-315 serves as the catalytic Tele-AMP-histidine intermediate.

It belongs to the RNA 3'-terminal cyclase family. Type 1 subfamily.

It localises to the cytoplasm. It catalyses the reaction a 3'-end 3'-phospho-ribonucleotide-RNA + ATP = a 3'-end 2',3'-cyclophospho-ribonucleotide-RNA + AMP + diphosphate. Functionally, catalyzes the conversion of 3'-phosphate to a 2',3'-cyclic phosphodiester at the end of RNA. The mechanism of action of the enzyme occurs in 3 steps: (A) adenylation of the enzyme by ATP; (B) transfer of adenylate to an RNA-N3'P to produce RNA-N3'PP5'A; (C) and attack of the adjacent 2'-hydroxyl on the 3'-phosphorus in the diester linkage to produce the cyclic end product. The biological role of this enzyme is unknown but it is likely to function in some aspects of cellular RNA processing. This is RNA 3'-terminal phosphate cyclase from Ignicoccus hospitalis (strain KIN4/I / DSM 18386 / JCM 14125).